The chain runs to 179 residues: MSRIGKQPVPVPAGVDVNIDGQNISVKGSKGTLELTVSEPISVSRNDDGAIVVTRPDDERRNRSLHGLSRTLIANLVTGVTQGYTTKMEIFGVGYRVVAKGSNLEFALGYSHPVLIEAPEGITFAVETPTKFSISGIDKQKVGQISANIRRLRRPDPYKGKGIRYEGEQIRRKVGKTGK.

It belongs to the universal ribosomal protein uL6 family. In terms of assembly, part of the 50S ribosomal subunit.

This protein binds to the 23S rRNA, and is important in its secondary structure. It is located near the subunit interface in the base of the L7/L12 stalk, and near the tRNA binding site of the peptidyltransferase center. This chain is Large ribosomal subunit protein uL6, found in Mycobacteroides abscessus (strain ATCC 19977 / DSM 44196 / CCUG 20993 / CIP 104536 / JCM 13569 / NCTC 13031 / TMC 1543 / L948) (Mycobacterium abscessus).